The primary structure comprises 102 residues: Large ribosomal subunit protein bL21 (102 aa).

Belongs to the bacterial ribosomal protein bL21 family. Part of the 50S ribosomal subunit. Contacts protein L20.

Functionally, this protein binds to 23S rRNA in the presence of protein L20. In Desulfovibrio desulfuricans (strain ATCC 27774 / DSM 6949 / MB), this protein is Large ribosomal subunit protein bL21.